The chain runs to 169 residues: Small ribosomal subunit protein uS13m (169 aa).

The tract at residues 149 to 169 (KKLQEKKNKEQKKSQKCKTKK) is disordered. The span at 150-161 (KLQEKKNKEQKK) shows a compositional bias: basic and acidic residues.

The protein belongs to the universal ribosomal protein uS13 family. In terms of assembly, part of the small ribosomal subunit.

The protein resides in the mitochondrion. Its function is as follows. Located at the top of the head of the small subunit, it contacts several helices of the small subunit rRNA. The sequence is that of Small ribosomal subunit protein uS13m (mrps13) from Dictyostelium discoideum (Social amoeba).